Consider the following 133-residue polypeptide: Capsid protein (133 aa).

This sequence belongs to the Leviviricetes capsid protein family. As to quaternary structure, homodimer. The homodimers binds to the viral RNA via an operator hairpin, but also to many other RNA sequences in the viral genome; this interaction probably shifts the virus from the replicative to the assembly phase and ensures specific encapsidation of the viral genome. Interacts with the maturation protein A2.

Its subcellular location is the virion. Its function is as follows. Capsid protein self-assembles to form an icosahedral capsid with a T=3 symmetry, about 26 nm in diameter, and consisting of 89 capsid proteins dimers (178 capsid proteins). Involved in viral genome encapsidation through the interaction between a capsid protein dimer and the multiple packaging signals present in the RNA genome. Binding of the capsid proteins to the viral RNA induces a conformational change required for efficient T=3 shell formation. The capsid also contains 1 copy of the A2 maturation protein. Functionally, acts as a translational repressor of viral replicase synthesis late in infection. This latter function is the result of capsid protein interaction with an RNA hairpin which contains the replicase ribosome-binding site. This chain is Capsid protein, found in Escherichia virus Qbeta (Bacteriophage Q-beta).